The following is an 818-amino-acid chain: MLLWSGICGLSPPRIFPSLLVVVALVGLLPVLRSHGLQPSPTASTIRGSEPPRERSIGDVTTAPPELAPESRPVNHSVTEHGMKARKAFPVLGIDYTHVRTPFEISLWILLACLMKIGFHVIPTISSIVPESCLLIVVGLLVGGLIKAVGETPPFLQSEVFFLFLLPPIILDAGYFLPLRQFTENLGTILIFAVVGTLWNAFFLGGLMYAVCLVGGEQINNIGLLDNLLFGSIISAVDPVAVLAVFEEIHINELLHILVFGESLLNDAVTVVLYHLFEEFANYDRVGIVDIVLGFLSFFVVSLGGVFVGVVYGVIAAFTSRFTSHIRVIEPLFVFLYSYMAYLSAELFHLSGIMALIASGVVMRPYVEANISHKSHTTIKYFLKMWSSVSETLIFIFLGVSTVAGSHHWNWTFVISTLLFCLIARVLGVLGLTWFINKFRIVKLTPKDQFIIAYGGLRGAIAFSLGHLLDKNHFPMCDLFLTAIITVIFFTVFVQGMTIRPLVDLLAVKKKQETKRSINEEIHTQFLDHLLTGIEDICGHYGHHHWKDKLNRFNKKYVKKCLIAGERSKEPQLIAFYHKMEMKQAIELVESGGMGKIPSAVSTVSMQNIHPKTLPTERILPALSKDKEEEIRKILRNNLQKTRQRLRSYNRHTLVADPYEEAWNQMLLRRQKARQLEQKINNHLTVPAHKLDSPTMSRARIGSDPLAYEPKADLPVITIDPASPQSPESVDLVNEELKGKVLGLSREPGRATEEEDDDEDHDGGLVMRTKEPSSPGTDDVFTPAPSDSPSSQRIQRCLSDPGPHPEPGEGEPFIPKGQ.

Residues 1–98 (MLLWSGICGL…FPVLGIDYTH (98 aa)) are Extracellular-facing. Residues 39-76 (PSPTASTIRGSEPPRERSIGDVTTAPPELAPESRPVNH) are disordered. Asn75 is a glycosylation site (N-linked (GlcNAc...) asparagine). Residues 99–121 (VRTPFEISLWILLACLMKIGFHV) form a helical membrane-spanning segment. Residues 122-130 (IPTISSIVP) are Cytoplasmic-facing. Residues 131 to 148 (ESCLLIVVGLLVGGLIKA) form a helical membrane-spanning segment. Residues 149-158 (VGETPPFLQS) are Extracellular-facing. The helical transmembrane segment at 159 to 176 (EVFFLFLLPPIILDAGYF) threads the bilayer. The Cytoplasmic portion of the chain corresponds to 177-186 (LPLRQFTENL). A helical membrane pass occupies residues 187–215 (GTILIFAVVGTLWNAFFLGGLMYAVCLVG). The Extracellular segment spans residues 216 to 222 (GEQINNI). Residues 223 to 249 (GLLDNLLFGSIISAVDPVAVLAVFEEI) traverse the membrane as a helical segment. The Cytoplasmic portion of the chain corresponds to 250 to 252 (HIN). Residues 253–283 (ELLHILVFGESLLNDAVTVVLYHLFEEFANY) traverse the membrane as a helical segment. Residues 284–287 (DRVG) lie on the Extracellular side of the membrane. Residues 288–322 (IVDIVLGFLSFFVVSLGGVFVGVVYGVIAAFTSRF) traverse the membrane as a helical segment. Over 323-328 (TSHIRV) the chain is Cytoplasmic. A helical transmembrane segment spans residues 329 to 341 (IEPLFVFLYSYMA). Topologically, residues 342-350 (YLSAELFHL) are extracellular. The chain crosses the membrane as a helical span at residues 351–371 (SGIMALIASGVVMRPYVEANI). Residues 372–373 (SH) are Cytoplasmic-facing. Residues 374-404 (KSHTTIKYFLKMWSSVSETLIFIFLGVSTVA) traverse the membrane as a helical segment. The Extracellular portion of the chain corresponds to 405–410 (GSHHWN). A helical transmembrane segment spans residues 411–438 (WTFVISTLLFCLIARVLGVLGLTWFINK). Residues 439–444 (FRIVKL) are Cytoplasmic-facing. The helical transmembrane segment at 445-469 (TPKDQFIIAYGGLRGAIAFSLGHLL) threads the bilayer. The Extracellular segment spans residues 470–475 (DKNHFP). A helical transmembrane segment spans residues 476–505 (MCDLFLTAIITVIFFTVFVQGMTIRPLVDL). Positions 503-545 (VDLLAVKKKQETKRSINEEIHTQFLDHLLTGIEDICGHYGHHH) are interaction with TESC. The Cytoplasmic segment spans residues 506–818 (LAVKKKQETK…EGEPFIPKGQ (313 aa)). Residues 509–516 (KKKQETKR) are PI(4,5)P2-binding region. The interval 515–545 (KRSINEEIHTQFLDHLLTGIEDICGHYGHHH) is interaction with CHP2. Residues 540–545 (HYGHHH) are confers pH-dependent PI(4,5)P2 binding. The PI(4,5)P2-binding region stretch occupies residues 552–560 (RFNKKYVKK). Residues Ser599 and Ser602 each carry the phosphoserine modification. A Phosphothreonine modification is found at Thr603. Phosphoserine occurs at positions 605 and 648. Residues 633–818 (KILRNNLQKT…EGEPFIPKGQ (186 aa)) form an interaction with TESC region. The interval 633–818 (KILRNNLQKT…EGEPFIPKGQ (186 aa)) is interaction with CALM1. Residues 684–687 (LTVP) are interaction with PPP3CA. Ser693, Ser697, and Ser703 each carry phosphoserine. Residues 715–720 (PVITID) are interaction with PPP3CA. Ser723, Ser726, and Ser729 each carry phosphoserine. The segment at 739–818 (GKVLGLSREP…EGEPFIPKGQ (80 aa)) is disordered. Thr752 and Thr782 each carry phosphothreonine. A compositionally biased stretch (polar residues) spans 785–794 (PSDSPSSQRI). Ser788, Ser790, and Ser799 each carry phosphoserine.

This sequence belongs to the monovalent cation:proton antiporter 1 (CPA1) transporter (TC 2.A.36) family. In terms of assembly, homodimer; dimerization is crucial for its function. Oligomer. Interacts with CALM in a calcium-dependent manner. Interacts with TESC. Interacts (via the juxtamembrane region of the cytoplasmic C-terminal domain) with CHP1; the interaction occurs at the plasma membrane in a calcium-dependent manner. Interacts with CHP2; the interaction occurs in a calcium-dependent manner. Interacts with EZR; regulates the cytoskeletal interactions of SLC9A1 and promotes stress fiber formation. Ubiquitinated, leading to its degradation by the proteasome. Ubiquitination is reduced by CHP1. Post-translationally, O-glycosylated. In terms of processing, palmitoylated; may play a major role in SLC9A1 regulation. Phosphorylation at Thr-782 increases SLC9A1 activity. Specifically dephosphorylated at Thr-782 by PPP3CA that negatively regulates SLC9A1 activity. Phosphorylation at Ser-648 by AKT1 reduces SLC9A1 binding to CALM1.

The protein localises to the cell membrane. The protein resides in the basolateral cell membrane. The catalysed reaction is Na(+)(in) + H(+)(out) = Na(+)(out) + H(+)(in). The enzyme catalyses Li(+)(out) + H(+)(in) = Li(+)(in) + H(+)(out). It carries out the reaction Li(+)(in) + Na(+)(out) = Li(+)(out) + Na(+)(in). With respect to regulation, activated at acidic pHs. Inhibited by cariporide and eniporide. Inhibited by amiloride and 5-amino-substituted derivatives. Phosphatidylinositol 4,5-bisphosphate (PI(4,5)P2) and phosphatidylinositol 3,4,5-trisphosphate (PI(3,4,5)P3) bind and differentially regulate SLC9A1 activity. Its function is as follows. Electroneutral Na(+) /H(+) antiporter that extrudes Na(+) in exchange for external protons driven by the inward sodium ion chemical gradient, protecting cells from acidification that occurs from metabolism. Exchanges intracellular H(+) ions for extracellular Na(+) in 1:1 stoichiometry. Plays a key role in maintening intracellular pH neutral and cell volume, and thus is important for cell growth, proliferation, migration and survival. In addition, can transport lithium Li(+) and also functions as a Na(+)/Li(+) antiporter. SLC9A1 also functions in membrane anchoring and organization of scaffolding complexes that coordinate signaling inputs. In Sus scrofa (Pig), this protein is Sodium/hydrogen exchanger 1 (SLC9A1).